A 758-amino-acid polypeptide reads, in one-letter code: 5-methyltetrahydropteroyltriglutamate--homocysteine methyltransferase (758 aa).

5-methyltetrahydropteroyltri-L-glutamate is bound by residues 17-20 (RELK) and Lys113. Residues 433-435 (IGS) and Glu486 each bind L-homocysteine. Residues 433–435 (IGS) and Glu486 each bind L-methionine. 5-methyltetrahydropteroyltri-L-glutamate-binding positions include 517–518 (RC) and Trp563. Asp601 contacts L-homocysteine. Residue Asp601 participates in L-methionine binding. Residue Glu607 coordinates 5-methyltetrahydropteroyltri-L-glutamate. His643, Cys645, and Glu667 together coordinate Zn(2+). His696 acts as the Proton donor in catalysis. Cys728 lines the Zn(2+) pocket.

It belongs to the vitamin-B12 independent methionine synthase family. The cofactor is Zn(2+).

It catalyses the reaction 5-methyltetrahydropteroyltri-L-glutamate + L-homocysteine = tetrahydropteroyltri-L-glutamate + L-methionine. It functions in the pathway amino-acid biosynthesis; L-methionine biosynthesis via de novo pathway; L-methionine from L-homocysteine (MetE route): step 1/1. Catalyzes the transfer of a methyl group from 5-methyltetrahydrofolate to homocysteine resulting in methionine formation. This chain is 5-methyltetrahydropteroyltriglutamate--homocysteine methyltransferase, found in Nitrosomonas europaea (strain ATCC 19718 / CIP 103999 / KCTC 2705 / NBRC 14298).